The chain runs to 240 residues: 4-hydroxy-tetrahydrodipicolinate reductase (240 aa).

NAD(+) is bound by residues 79-81 (ATT) and 103-106 (SANM). Residue H135 is the Proton donor/acceptor of the active site. H136 contacts (S)-2,3,4,5-tetrahydrodipicolinate. K139 functions as the Proton donor in the catalytic mechanism. 145-146 (GT) provides a ligand contact to (S)-2,3,4,5-tetrahydrodipicolinate.

This sequence belongs to the DapB family.

The protein localises to the cytoplasm. It carries out the reaction (S)-2,3,4,5-tetrahydrodipicolinate + NAD(+) + H2O = (2S,4S)-4-hydroxy-2,3,4,5-tetrahydrodipicolinate + NADH + H(+). The catalysed reaction is (S)-2,3,4,5-tetrahydrodipicolinate + NADP(+) + H2O = (2S,4S)-4-hydroxy-2,3,4,5-tetrahydrodipicolinate + NADPH + H(+). Its pathway is amino-acid biosynthesis; L-lysine biosynthesis via DAP pathway; (S)-tetrahydrodipicolinate from L-aspartate: step 4/4. Functionally, catalyzes the conversion of 4-hydroxy-tetrahydrodipicolinate (HTPA) to tetrahydrodipicolinate. In Staphylococcus aureus (strain MSSA476), this protein is 4-hydroxy-tetrahydrodipicolinate reductase.